Reading from the N-terminus, the 228-residue chain is 7-cyano-7-deazaguanine synthase (228 aa).

7–17 (LSGGLDSAVNL) provides a ligand contact to ATP. Residues Cys-192, Cys-200, Cys-203, and Cys-206 each contribute to the Zn(2+) site.

The protein belongs to the QueC family. As to quaternary structure, homodimer. Zn(2+) serves as cofactor.

The enzyme catalyses 7-carboxy-7-deazaguanine + NH4(+) + ATP = 7-cyano-7-deazaguanine + ADP + phosphate + H2O + H(+). The protein operates within purine metabolism; 7-cyano-7-deazaguanine biosynthesis. Catalyzes the ATP-dependent conversion of 7-carboxy-7-deazaguanine (CDG) to 7-cyano-7-deazaguanine (preQ(0)). This chain is 7-cyano-7-deazaguanine synthase, found in Desulforamulus reducens (strain ATCC BAA-1160 / DSM 100696 / MI-1) (Desulfotomaculum reducens).